The sequence spans 127 residues: Large ribosomal subunit protein bL17 (127 aa).

This sequence belongs to the bacterial ribosomal protein bL17 family. In terms of assembly, part of the 50S ribosomal subunit. Contacts protein L32.

This is Large ribosomal subunit protein bL17 from Mannheimia succiniciproducens (strain KCTC 0769BP / MBEL55E).